We begin with the raw amino-acid sequence, 570 residues long: Glutamate--tRNA ligase (570 aa).

The 'HIGH' region signature appears at 107–117 (PNPDFVLHLGS).

The protein belongs to the class-I aminoacyl-tRNA synthetase family. Glutamate--tRNA ligase type 2 subfamily.

It localises to the cytoplasm. The catalysed reaction is tRNA(Glu) + L-glutamate + ATP = L-glutamyl-tRNA(Glu) + AMP + diphosphate. Functionally, catalyzes the attachment of glutamate to tRNA(Glu) in a two-step reaction: glutamate is first activated by ATP to form Glu-AMP and then transferred to the acceptor end of tRNA(Glu). This is Glutamate--tRNA ligase from Pyrobaculum calidifontis (strain DSM 21063 / JCM 11548 / VA1).